Consider the following 627-residue polypeptide: DNA mismatch repair protein MutL (627 aa).

Residues 354-364 (DEKPPEKKVPE) show a composition bias toward basic and acidic residues. Positions 354 to 374 (DEKPPEKKVPEKSTAPSYSPM) are disordered.

This sequence belongs to the DNA mismatch repair MutL/HexB family.

In terms of biological role, this protein is involved in the repair of mismatches in DNA. It is required for dam-dependent methyl-directed DNA mismatch repair. May act as a 'molecular matchmaker', a protein that promotes the formation of a stable complex between two or more DNA-binding proteins in an ATP-dependent manner without itself being part of a final effector complex. Overexpression of mutSL partially suppresses the high spontaneous mutation frequency of a ytkD/mutM/mutY triple disruption which lacks the system required to prevent damage by oxidized guanine (8-oxo-dGTP). This suggests that MutSL also functions to repair mismatches due to oxidative stress in both growing and stationary phase cells. This chain is DNA mismatch repair protein MutL, found in Bacillus subtilis (strain 168).